We begin with the raw amino-acid sequence, 567 residues long: Wee1-like protein kinase 2 (567 aa).

2 stretches are compositionally biased toward basic and acidic residues: residues M1 to Q12 and E26 to E36. 2 disordered regions span residues M1 to S103 and R170 to V191. S77 carries the phosphoserine modification. The Nuclear localization signal motif lies at K174–K176. Residues F215 to L494 form the Protein kinase domain. ATP-binding positions include I221–V229 and K244. The short motif at K318 to Y332 is the Nuclear export signal element. The active-site Proton acceptor is the D342. The Mg(2+) site is built by N347 and D384. Residues A497–Q523 adopt a coiled-coil conformation. A disordered region spans residues Q502–P567. The segment covering E507–E520 has biased composition (basic and acidic residues). The span at A555 to P567 shows a compositional bias: polar residues.

Belongs to the protein kinase superfamily. Ser/Thr protein kinase family. WEE1 subfamily. Phosphorylation leads to increase its activity.

It is found in the nucleus. It carries out the reaction L-tyrosyl-[protein] + ATP = O-phospho-L-tyrosyl-[protein] + ADP + H(+). Functionally, oocyte-specific protein tyrosine kinase that phosphorylates and inhibits CDK1 and acts as a key regulator of meiosis during both prophase I and metaphase II. Required to maintain meiotic arrest in oocytes during the germinal vesicle (GV) stage, a long period of quiescence at dictyate prophase I, by phosphorylating CDK1 at 'Tyr-15', leading to inhibit CDK1 activity and prevent meiotic reentry. Also required for metaphase II exit during egg activation by phosphorylating CDK1 at 'Tyr-15', to ensure exit from meiosis in oocytes and promote pronuclear formation. This chain is Wee1-like protein kinase 2 (WEE2), found in Canis lupus familiaris (Dog).